The sequence spans 134 residues: Small ribosomal subunit protein uS11 (134 aa).

Belongs to the universal ribosomal protein uS11 family. In terms of assembly, part of the 30S ribosomal subunit. Interacts with proteins S7 and S18. Binds to IF-3.

Its function is as follows. Located on the platform of the 30S subunit, it bridges several disparate RNA helices of the 16S rRNA. Forms part of the Shine-Dalgarno cleft in the 70S ribosome. The chain is Small ribosomal subunit protein uS11 from Paracidovorax citrulli (strain AAC00-1) (Acidovorax citrulli).